We begin with the raw amino-acid sequence, 118 residues long: Large ribosomal subunit protein bL20 (118 aa).

The protein belongs to the bacterial ribosomal protein bL20 family.

Its function is as follows. Binds directly to 23S ribosomal RNA and is necessary for the in vitro assembly process of the 50S ribosomal subunit. It is not involved in the protein synthesizing functions of that subunit. The chain is Large ribosomal subunit protein bL20 from Thermotoga neapolitana (strain ATCC 49049 / DSM 4359 / NBRC 107923 / NS-E).